Here is a 390-residue protein sequence, read N- to C-terminus: Chalcone synthase (390 aa).

Residue Cys-164 is part of the active site.

This sequence belongs to the thiolase-like superfamily. Chalcone/stilbene synthases family.

It catalyses the reaction (E)-4-coumaroyl-CoA + 3 malonyl-CoA + 3 H(+) = 2',4,4',6'-tetrahydroxychalcone + 3 CO2 + 4 CoA. It participates in secondary metabolite biosynthesis; flavonoid biosynthesis. In terms of biological role, the primary product of this enzyme is 4,2',4',6'-tetrahydroxychalcone (also termed naringenin-chalcone or chalcone) which can under specific conditions spontaneously isomerize into naringenin. This is Chalcone synthase (CHS) from Onobrychis viciifolia (Common sainfoin).